The following is a 151-amino-acid chain: Large ribosomal subunit protein bL9 (151 aa).

This sequence belongs to the bacterial ribosomal protein bL9 family.

Binds to the 23S rRNA. In Azoarcus sp. (strain BH72), this protein is Large ribosomal subunit protein bL9.